Consider the following 342-residue polypeptide: Anthranilate phosphoribosyltransferase (342 aa).

Residues Gly79, 82-83 (GD), Thr87, 89-92 (NVST), 107-115 (KHGNRSVSS), and Ser119 each bind 5-phospho-alpha-D-ribose 1-diphosphate. Gly79 is an anthranilate binding site. Ser91 is a binding site for Mg(2+). Asn110 provides a ligand contact to anthranilate. Arg165 contacts anthranilate. The Mg(2+) site is built by Asp223 and Glu224.

The protein belongs to the anthranilate phosphoribosyltransferase family. As to quaternary structure, homodimer. It depends on Mg(2+) as a cofactor.

The enzyme catalyses N-(5-phospho-beta-D-ribosyl)anthranilate + diphosphate = 5-phospho-alpha-D-ribose 1-diphosphate + anthranilate. Its pathway is amino-acid biosynthesis; L-tryptophan biosynthesis; L-tryptophan from chorismate: step 2/5. Catalyzes the transfer of the phosphoribosyl group of 5-phosphorylribose-1-pyrophosphate (PRPP) to anthranilate to yield N-(5'-phosphoribosyl)-anthranilate (PRA). In Aeromonas hydrophila subsp. hydrophila (strain ATCC 7966 / DSM 30187 / BCRC 13018 / CCUG 14551 / JCM 1027 / KCTC 2358 / NCIMB 9240 / NCTC 8049), this protein is Anthranilate phosphoribosyltransferase.